A 346-amino-acid chain; its full sequence is Small ribosomal subunit biogenesis GTPase RsgA 2 (346 aa).

Residues 93 to 248 (EEQLIAANFD…VIDTPGMREF (156 aa)) form the CP-type G domain. Residues 138–141 (TKAD) and 190–198 (GSSGVGKSS) contribute to the GTP site. Zn(2+)-binding residues include cysteine 271, cysteine 276, histidine 278, and cysteine 284.

It belongs to the TRAFAC class YlqF/YawG GTPase family. RsgA subfamily. In terms of assembly, monomer. Associates with 30S ribosomal subunit, binds 16S rRNA. Zn(2+) serves as cofactor.

It localises to the cytoplasm. One of several proteins that assist in the late maturation steps of the functional core of the 30S ribosomal subunit. Helps release RbfA from mature subunits. May play a role in the assembly of ribosomal proteins into the subunit. Circularly permuted GTPase that catalyzes slow GTP hydrolysis, GTPase activity is stimulated by the 30S ribosomal subunit. This is Small ribosomal subunit biogenesis GTPase RsgA 2 from Listeria monocytogenes serotype 4b (strain F2365).